Reading from the N-terminus, the 315-residue chain is PIH1 domain-containing protein 2 (315 aa).

This sequence belongs to the PIH1 family.

This Bos taurus (Bovine) protein is PIH1 domain-containing protein 2 (PIH1D2).